The sequence spans 58 residues: Ribosome modulation factor (58 aa).

Belongs to the ribosome modulation factor family.

The protein resides in the cytoplasm. During stationary phase, converts 70S ribosomes to an inactive dimeric form (100S ribosomes). The sequence is that of Ribosome modulation factor from Shewanella amazonensis (strain ATCC BAA-1098 / SB2B).